Consider the following 398-residue polypeptide: Cysteine desulfurase (398 aa).

Pyridoxal 5'-phosphate contacts are provided by residues 74–75, N155, Q182, and 202–204; these read GT and CGH. An N6-(pyridoxal phosphate)lysine modification is found at K205. The segment covering 230–244 has biased composition (basic and acidic residues); it reads GHQERSRRAGNGERA. The segment at 230 to 253 is disordered; that stretch reads GHQERSRRAGNGERAGHRRAGGGA. Residue C327 is the Cysteine persulfide intermediate of the active site. [2Fe-2S] cluster is bound at residue C327.

Belongs to the class-V pyridoxal-phosphate-dependent aminotransferase family. NifS/IscS subfamily. In terms of assembly, homodimer. The cofactor is pyridoxal 5'-phosphate.

It carries out the reaction (sulfur carrier)-H + L-cysteine = (sulfur carrier)-SH + L-alanine. In terms of biological role, catalyzes the removal of elemental sulfur atoms from cysteine to produce alanine. Seems to participate in the biosynthesis of the nitrogenase metalloclusters by providing the inorganic sulfur required for the Fe-S core formation. In Azospirillum brasilense, this protein is Cysteine desulfurase.